The following is a 173-amino-acid chain: Small ribosomal subunit protein uS11m (173 aa).

This sequence belongs to the universal ribosomal protein uS11 family.

Its subcellular location is the mitochondrion. The chain is Small ribosomal subunit protein uS11m (RPS11) from Acanthamoeba castellanii (Amoeba).